Consider the following 396-residue polypeptide: Argininosuccinate synthase (396 aa).

9-17 (AYSGGLDTS) contributes to the ATP binding site. L-citrulline is bound at residue Y85. G115 is a binding site for ATP. T117, N121, and D122 together coordinate L-aspartate. Position 121 (N121) interacts with L-citrulline. Residues R125, S173, E258, and Y270 each coordinate L-citrulline.

Belongs to the argininosuccinate synthase family. Type 1 subfamily. In terms of assembly, homotetramer.

The protein localises to the cytoplasm. It catalyses the reaction L-citrulline + L-aspartate + ATP = 2-(N(omega)-L-arginino)succinate + AMP + diphosphate + H(+). It participates in amino-acid biosynthesis; L-arginine biosynthesis; L-arginine from L-ornithine and carbamoyl phosphate: step 2/3. The sequence is that of Argininosuccinate synthase from Streptococcus agalactiae serotype III (strain NEM316).